A 135-amino-acid chain; its full sequence is ATP synthase epsilon chain (135 aa).

This sequence belongs to the ATPase epsilon chain family. As to quaternary structure, F-type ATPases have 2 components, CF(1) - the catalytic core - and CF(0) - the membrane proton channel. CF(1) has five subunits: alpha(3), beta(3), gamma(1), delta(1), epsilon(1). CF(0) has three main subunits: a, b and c.

It is found in the cellular thylakoid membrane. In terms of biological role, produces ATP from ADP in the presence of a proton gradient across the membrane. This is ATP synthase epsilon chain from Prochlorococcus marinus (strain NATL1A).